Consider the following 224-residue polypeptide: Peroxiredoxin-6 (224 aa).

A Thioredoxin domain is found at 5 to 169; that stretch reads LLLGDEAPNF…ILRVVISLQL (165 aa). The interval 31 to 40 is required and sufficient for targeting to lysosomes and lamellar bodies; that stretch reads DSWGILFSHP. Phosphothreonine is present on Thr-44. Catalysis depends on Cys-47, which acts as the Cysteine sulfenic acid (-SOH) intermediate; for peroxidase activity. Residue Lys-63 is modified to N6-acetyllysine. Position 89 is a phosphotyrosine (Tyr-89). Catalysis depends on Asp-140, which acts as the For phospholipase activity. Phosphothreonine; by MAPK is present on Thr-177. Lys-209 is modified (N6-acetyllysine; alternate). Lys-209 carries the post-translational modification N6-succinyllysine; alternate.

Belongs to the peroxiredoxin family. Prx6 subfamily. Homodimer. Interacts with GSTP1; mediates PRDX6 glutathionylation and regeneration. Interacts with APEX1. Interacts with STH. May interact with FAM168B. May interact with HTR2A. Irreversibly inactivated by overoxidation of Cys-47 to sulfinic acid (Cys-SO(2)H) and sulfonic acid (Cys-SO(3)H) forms upon oxidative stress. Post-translationally, phosphorylation at Thr-177 by MAP kinases increases the phospholipase activity of the enzyme. The phosphorylated form exhibits a greater lysophosphatidylcholine acyltransferase activity compared to the non-phosphorylated form.

Its subcellular location is the cytoplasm. It localises to the lysosome. It carries out the reaction a hydroperoxide + 2 glutathione = an alcohol + glutathione disulfide + H2O. It catalyses the reaction a 1,2-diacyl-sn-glycero-3-phosphocholine + H2O = a 1-acyl-sn-glycero-3-phosphocholine + a fatty acid + H(+). The catalysed reaction is a 1-acyl-sn-glycero-3-phosphocholine + an acyl-CoA = a 1,2-diacyl-sn-glycero-3-phosphocholine + CoA. The enzyme catalyses 1-hexadecanoyl-sn-glycero-3-phosphocholine + hexadecanoyl-CoA = 1,2-dihexadecanoyl-sn-glycero-3-phosphocholine + CoA. It carries out the reaction 1,2-dihexadecanoyl-sn-glycero-3-phosphocholine + H2O = 1-hexadecanoyl-sn-glycero-3-phosphocholine + hexadecanoate + H(+). Functionally, thiol-specific peroxidase that catalyzes the reduction of hydrogen peroxide and organic hydroperoxides to water and alcohols, respectively. Can reduce H(2)O(2) and short chain organic, fatty acid, and phospholipid hydroperoxides. Also has phospholipase activity, and can therefore either reduce the oxidized sn-2 fatty acyl group of phospholipids (peroxidase activity) or hydrolyze the sn-2 ester bond of phospholipids (phospholipase activity). These activities are dependent on binding to phospholipids at acidic pH and to oxidized phospholipds at cytosolic pH. Plays a role in cell protection against oxidative stress by detoxifying peroxides and in phospholipid homeostasis. Exhibits acyl-CoA-dependent lysophospholipid acyltransferase which mediates the conversion of lysophosphatidylcholine (1-acyl-sn-glycero-3-phosphocholine or LPC) into phosphatidylcholine (1,2-diacyl-sn-glycero-3-phosphocholine or PC). Shows a clear preference for LPC as the lysophospholipid and for palmitoyl CoA as the fatty acyl substrate. This is Peroxiredoxin-6 (PRDX6) from Macaca fascicularis (Crab-eating macaque).